A 380-amino-acid chain; its full sequence is Probable dual-specificity RNA methyltransferase RlmN (380 aa).

Catalysis depends on E112, which acts as the Proton acceptor. The region spanning 118–358 is the Radical SAM core domain; sequence YPDRVTACLS…TTVRDTRGRE (241 aa). C125 and C363 form a disulfide bridge. Residues C132, C136, and C139 each contribute to the [4Fe-4S] cluster site. Residues 187 to 188, S221, 244 to 246, and N320 each bind S-adenosyl-L-methionine; these read GE and SLH. The active-site S-methylcysteine intermediate is the C363.

The protein belongs to the radical SAM superfamily. RlmN family. [4Fe-4S] cluster serves as cofactor.

It localises to the cytoplasm. It carries out the reaction adenosine(2503) in 23S rRNA + 2 reduced [2Fe-2S]-[ferredoxin] + 2 S-adenosyl-L-methionine = 2-methyladenosine(2503) in 23S rRNA + 5'-deoxyadenosine + L-methionine + 2 oxidized [2Fe-2S]-[ferredoxin] + S-adenosyl-L-homocysteine. It catalyses the reaction adenosine(37) in tRNA + 2 reduced [2Fe-2S]-[ferredoxin] + 2 S-adenosyl-L-methionine = 2-methyladenosine(37) in tRNA + 5'-deoxyadenosine + L-methionine + 2 oxidized [2Fe-2S]-[ferredoxin] + S-adenosyl-L-homocysteine. Functionally, specifically methylates position 2 of adenine 2503 in 23S rRNA and position 2 of adenine 37 in tRNAs. The chain is Probable dual-specificity RNA methyltransferase RlmN from Salinispora arenicola (strain CNS-205).